A 447-amino-acid chain; its full sequence is Probable tRNA methyltransferase 9B (447 aa).

Serine 212 is subject to Phosphoserine. 2 disordered regions span residues 274-306 (AWANSTVSQQPSRHPSLDLHAPEPFSTKGPNLD) and 320-348 (WLRTPGTSDNFSGHKGGGSRRKEGGNFLD). The span at 276 to 286 (ANSTVSQQPSR) shows a compositional bias: polar residues.

Belongs to the methyltransferase superfamily.

May modify wobble uridines in specific arginine and glutamic acid tRNAs. Acts as a tumor suppressor by promoting the expression of LIN9. In Mus musculus (Mouse), this protein is Probable tRNA methyltransferase 9B (Trmt9b).